Consider the following 1597-residue polypeptide: Rho guanine nucleotide exchange factor 5 (1597 aa).

Disordered stretches follow at residues 138–246 (PFSS…EGTL), 258–455 (EEQM…SLEP), and 467–1072 (GSFL…VFRE). Ser-184 carries the post-translational modification Phosphoserine. Residues 192–204 (ETNQNEGSESGTI) show a composition bias toward polar residues. Low complexity predominate over residues 217–237 (ESQGLLHPQEVQVLEEQGQQE). Residues 266–278 (NDEKGEQKQKQEQ) are compositionally biased toward basic and acidic residues. The span at 299-309 (GLNDGEWEQED) shows a compositional bias: acidic residues. Basic and acidic residues-rich tracts occupy residues 323–368 (GEER…KEKG) and 394–404 (RSREEENEHHG). The span at 428 to 438 (LMTQIPGTQTE) shows a compositional bias: polar residues. Phosphoserine is present on residues Ser-445 and Ser-450. Residues 474 to 490 (SPDKEIDQNSQQEESRL) are compositionally biased toward basic and acidic residues. A compositionally biased stretch (pro residues) spans 512-522 (PRTPDSAPPSP). 2 stretches are compositionally biased toward polar residues: residues 583 to 601 (STGTSPPRPPANSTGTVQH) and 655 to 682 (DYSTVSASPTALSTLKQDSQESISNLER). Residues 731–746 (QRRDTHPSVVETDGHA) are compositionally biased toward basic and acidic residues. Pro residues-rich tracts occupy residues 812–828 (PLPPTPDLPQPHLPPIS) and 838–856 (PLPPLPIIDPPTEPPPLPP). Asymmetric dimethylarginine is present on Arg-866. Residues 901 to 920 (ATARSTESFTSTSRSKSEVS) are compositionally biased toward low complexity. Polar residues predominate over residues 926-941 (SNMTNFLCPSSPTTPW). Residues 950 to 969 (SKDEAGVSEHPEAPAREPLR) show a composition bias toward basic and acidic residues. 3 positions are modified to phosphoserine: Ser-983, Ser-1011, and Ser-1044. A compositionally biased stretch (basic and acidic residues) spans 990–1012 (QPEKPSHLHLEKASSWPHRRDSG). The segment covering 1057–1072 (AVEKHPGPSDTVVFRE) has biased composition (basic and acidic residues). Ser-1126 carries the phosphoserine modification. Positions 1174–1358 (KLQEVKFELI…EQLIRDCNNN (185 aa)) constitute a DH domain. Residues 1390-1502 (WLVKSGELTA…WISALAMPRE (113 aa)) form the PH domain. Residues 1510 to 1571 (YNSPQVQCLR…PVQQVEFISN (62 aa)) enclose the SH3 domain.

Interacts with SRC. Forms a ternary complex with SRC and the PI3K 85 kDa subunit. Interacts with and is activated by the heterodimer formed by GNB1 and GNG2. Interacts with ODAM (via C-terminus). Interacts with RHOA. In terms of processing, activation of SRC induces tyrosine phosphorylation of ARHGEF5. As to expression, ubiquitously expressed with highest levels in placenta. High levels are also found in colon, kidney, trachea, prostate, liver, pancreas, pituitary gland, thyroid gland and mammary gland. In fetal tissues, expressed at high levels in kidney, lung and liver. Expressed at low levels in lung and heart.

It is found in the cytoplasm. The protein localises to the nucleus. The protein resides in the cell projection. It localises to the podosome. In terms of biological role, guanine nucleotide exchange factor which activates Rho GTPases. Strongly activates RHOA. Also strongly activates RHOB, weakly activates RHOC and RHOG and shows no effect on RHOD, RHOV, RHOQ or RAC1. Involved in regulation of cell shape and actin cytoskeletal organization. Plays a role in actin organization by generating a loss of actin stress fibers and the formation of membrane ruffles and filopodia. Required for SRC-induced podosome formation. Involved in positive regulation of immature dendritic cell migration. In Homo sapiens (Human), this protein is Rho guanine nucleotide exchange factor 5 (ARHGEF5).